The chain runs to 455 residues: tRNA-2-methylthio-N(6)-dimethylallyladenosine synthase (455 aa).

One can recognise an MTTase N-terminal domain in the interval 18 to 133 (KKLFIETYGC…LPELIAAVEA (116 aa)). [4Fe-4S] cluster contacts are provided by cysteine 27, cysteine 63, cysteine 97, cysteine 171, cysteine 175, and cysteine 178. The Radical SAM core domain maps to 157–390 (CGNHISGFVS…IALQNRLSAE (234 aa)). The TRAM domain occupies 393-455 (QRCIGKTYEV…SSATLKGEEV (63 aa)).

This sequence belongs to the methylthiotransferase family. MiaB subfamily. As to quaternary structure, monomer. [4Fe-4S] cluster serves as cofactor.

It localises to the cytoplasm. It catalyses the reaction N(6)-dimethylallyladenosine(37) in tRNA + (sulfur carrier)-SH + AH2 + 2 S-adenosyl-L-methionine = 2-methylsulfanyl-N(6)-dimethylallyladenosine(37) in tRNA + (sulfur carrier)-H + 5'-deoxyadenosine + L-methionine + A + S-adenosyl-L-homocysteine + 2 H(+). In terms of biological role, catalyzes the methylthiolation of N6-(dimethylallyl)adenosine (i(6)A), leading to the formation of 2-methylthio-N6-(dimethylallyl)adenosine (ms(2)i(6)A) at position 37 in tRNAs that read codons beginning with uridine. This chain is tRNA-2-methylthio-N(6)-dimethylallyladenosine synthase, found in Bacteroides thetaiotaomicron (strain ATCC 29148 / DSM 2079 / JCM 5827 / CCUG 10774 / NCTC 10582 / VPI-5482 / E50).